The following is a 159-amino-acid chain: 2-C-methyl-D-erythritol 2,4-cyclodiphosphate synthase (159 aa).

A divalent metal cation-binding residues include Asp-8 and His-10. 4-CDP-2-C-methyl-D-erythritol 2-phosphate-binding positions include 8–10 (DVH) and 34–35 (HS). Residue His-42 participates in a divalent metal cation binding. 4-CDP-2-C-methyl-D-erythritol 2-phosphate-binding positions include 56-58 (DIG), 61-65 (FPDTD), 100-106 (AQAPKML), 132-135 (TTTE), Phe-139, and Arg-142.

Belongs to the IspF family. Homotrimer. A divalent metal cation serves as cofactor.

The catalysed reaction is 4-CDP-2-C-methyl-D-erythritol 2-phosphate = 2-C-methyl-D-erythritol 2,4-cyclic diphosphate + CMP. It functions in the pathway isoprenoid biosynthesis; isopentenyl diphosphate biosynthesis via DXP pathway; isopentenyl diphosphate from 1-deoxy-D-xylulose 5-phosphate: step 4/6. Functionally, involved in the biosynthesis of isopentenyl diphosphate (IPP) and dimethylallyl diphosphate (DMAPP), two major building blocks of isoprenoid compounds. Catalyzes the conversion of 4-diphosphocytidyl-2-C-methyl-D-erythritol 2-phosphate (CDP-ME2P) to 2-C-methyl-D-erythritol 2,4-cyclodiphosphate (ME-CPP) with a corresponding release of cytidine 5-monophosphate (CMP). This Escherichia coli O127:H6 (strain E2348/69 / EPEC) protein is 2-C-methyl-D-erythritol 2,4-cyclodiphosphate synthase.